A 390-amino-acid polypeptide reads, in one-letter code: Elongation factor Ts, mitochondrial (390 aa).

It belongs to the EF-Ts family.

The protein resides in the mitochondrion. Its function is as follows. Associates with the EF-Tu.GDP complex and induces the exchange of GDP to GTP. It remains bound to the aminoacyl-tRNA.EF-Tu.GTP complex up to the GTP hydrolysis stage on the ribosome. This chain is Elongation factor Ts, mitochondrial, found in Plasmodium falciparum (isolate 3D7).